The sequence spans 377 residues: uncharacterized protein (377 aa).

Helical transmembrane passes span isoleucine 71–serine 91 and alanine 140–phenylalanine 160.

It localises to the membrane. This is an uncharacterized protein from Coxiella burnetii (strain RSA 493 / Nine Mile phase I).